A 602-amino-acid polypeptide reads, in one-letter code: Elongation factor 4 (602 aa).

A tr-type G domain is found at 7–189; the sequence is SRIRNFCIIA…AVVDRVPAPA (183 aa). GTP-binding positions include 19 to 24 and 136 to 139; these read DHGKST and NKID.

Belongs to the TRAFAC class translation factor GTPase superfamily. Classic translation factor GTPase family. LepA subfamily.

It is found in the cell inner membrane. The enzyme catalyses GTP + H2O = GDP + phosphate + H(+). Required for accurate and efficient protein synthesis under certain stress conditions. May act as a fidelity factor of the translation reaction, by catalyzing a one-codon backward translocation of tRNAs on improperly translocated ribosomes. Back-translocation proceeds from a post-translocation (POST) complex to a pre-translocation (PRE) complex, thus giving elongation factor G a second chance to translocate the tRNAs correctly. Binds to ribosomes in a GTP-dependent manner. This Synechococcus sp. (strain CC9902) protein is Elongation factor 4.